The sequence spans 588 residues: Adenine deaminase (588 aa).

This sequence belongs to the metallo-dependent hydrolases superfamily. Adenine deaminase family. In terms of assembly, homodimer. Mn(2+) serves as cofactor.

The catalysed reaction is adenine + H2O + H(+) = hypoxanthine + NH4(+). This is Adenine deaminase from Escherichia coli O17:K52:H18 (strain UMN026 / ExPEC).